The chain runs to 26 residues: Mu-theraphotoxin-Phlo2a (26 aa).

Intrachain disulfides connect Cys-2–Cys-16, Cys-9–Cys-21, and Cys-15–Cys-25.

This sequence belongs to the neurotoxin 30 (phrixotoxin) family. As to expression, expressed by the venom gland.

The protein resides in the secreted. Functionally, gating-modifier toxin that non-selectively inhibits voltage-gated sodium channel Nav by shifting the threshold for channel activation to more positive potentials. This toxin moderately inhibits human Nav1.2/SCN2A (IC(50)=404 nM), Nav1.5/SCN5A (IC(50)=218 nM) and Nav1.7/SCN9A (IC(50)=333 nM). Inhibition of Nav1.7 is voltage-dependent, with lower inhibition at more positive test pulses. The sequence is that of Mu-theraphotoxin-Phlo2a from Phlogius sp. (Tarantula spider).